Here is a 213-residue protein sequence, read N- to C-terminus: Adenylate kinase (213 aa).

Residue 10 to 15 (GAGKGT) coordinates ATP. The segment at 30–59 (STGNLLRDEVKSKTDLGVDIEKLISNGKFV) is NMP. Residues threonine 31, arginine 36, 57–59 (KFV), 85–88 (GYPR), and glutamine 92 contribute to the AMP site. Residues 126–162 (GRMTCEKCNMTLNEYFNKEQIELHPCGVEHLKKRKDD) are LID. Arginine 127 is an ATP binding site. 2 residues coordinate AMP: arginine 159 and arginine 170. Glycine 198 contacts ATP.

This sequence belongs to the adenylate kinase family. As to quaternary structure, monomer.

It is found in the cytoplasm. The enzyme catalyses AMP + ATP = 2 ADP. It participates in purine metabolism; AMP biosynthesis via salvage pathway; AMP from ADP: step 1/1. In terms of biological role, catalyzes the reversible transfer of the terminal phosphate group between ATP and AMP. Plays an important role in cellular energy homeostasis and in adenine nucleotide metabolism. The protein is Adenylate kinase of Pelagibacter ubique (strain HTCC1062).